Consider the following 372-residue polypeptide: DNA replication and repair protein RecF (372 aa).

30–37 (GENAQGKT) serves as a coordination point for ATP.

It belongs to the RecF family.

The protein resides in the cytoplasm. In terms of biological role, the RecF protein is involved in DNA metabolism; it is required for DNA replication and normal SOS inducibility. RecF binds preferentially to single-stranded, linear DNA. It also seems to bind ATP. This Geobacillus kaustophilus (strain HTA426) protein is DNA replication and repair protein RecF.